Consider the following 176-residue polypeptide: NAD(P)H-quinone oxidoreductase subunit 6, chloroplastic (176 aa).

5 helical membrane-spanning segments follow: residues 10-30 (FLLV…VLLP), 32-52 (PIFS…LYIL), 61-81 (AQLL…VMFM), 92-112 (LWTV…FSLM), and 152-172 (FFLP…GAIS).

It belongs to the complex I subunit 6 family. As to quaternary structure, NDH is composed of at least 16 different subunits, 5 of which are encoded in the nucleus.

The protein localises to the plastid. Its subcellular location is the chloroplast thylakoid membrane. The enzyme catalyses a plastoquinone + NADH + (n+1) H(+)(in) = a plastoquinol + NAD(+) + n H(+)(out). It catalyses the reaction a plastoquinone + NADPH + (n+1) H(+)(in) = a plastoquinol + NADP(+) + n H(+)(out). Its function is as follows. NDH shuttles electrons from NAD(P)H:plastoquinone, via FMN and iron-sulfur (Fe-S) centers, to quinones in the photosynthetic chain and possibly in a chloroplast respiratory chain. The immediate electron acceptor for the enzyme in this species is believed to be plastoquinone. Couples the redox reaction to proton translocation, and thus conserves the redox energy in a proton gradient. The sequence is that of NAD(P)H-quinone oxidoreductase subunit 6, chloroplastic (ndhG) from Barbarea verna (Land cress).